The primary structure comprises 388 residues: Riboflavin biosynthesis protein RibBA (388 aa).

The DHBP synthase stretch occupies residues 1–186 (MEELREAFEE…MDDVWREFVK (186 aa)). D-ribulose 5-phosphate-binding positions include 21–22 (RE), aspartate 26, 125–129 (RKGHT), and glutamate 149. Residue glutamate 22 coordinates Mg(2+). Residue histidine 128 coordinates Mg(2+). Residues 187–388 (RKLLMKKKAE…LEEIFREVNS (202 aa)) form a GTP cyclohydrolase II region. 235–239 (RIHSE) is a GTP binding site. Residues cysteine 240, cysteine 251, and cysteine 253 each coordinate Zn(2+). GTP contacts are provided by residues glutamine 256, 277 to 279 (EGR), and threonine 299. Aspartate 311 acts as the Proton acceptor; for GTP cyclohydrolase activity in catalysis. Residue arginine 313 is the Nucleophile; for GTP cyclohydrolase activity of the active site. GTP-binding residues include threonine 334 and lysine 339.

The protein in the N-terminal section; belongs to the DHBP synthase family. This sequence in the C-terminal section; belongs to the GTP cyclohydrolase II family. Requires Mg(2+) as cofactor. It depends on Mn(2+) as a cofactor. Zn(2+) is required as a cofactor.

It catalyses the reaction D-ribulose 5-phosphate = (2S)-2-hydroxy-3-oxobutyl phosphate + formate + H(+). The catalysed reaction is GTP + 4 H2O = 2,5-diamino-6-hydroxy-4-(5-phosphoribosylamino)-pyrimidine + formate + 2 phosphate + 3 H(+). Its pathway is cofactor biosynthesis; riboflavin biosynthesis; 2-hydroxy-3-oxobutyl phosphate from D-ribulose 5-phosphate: step 1/1. It participates in cofactor biosynthesis; riboflavin biosynthesis; 5-amino-6-(D-ribitylamino)uracil from GTP: step 1/4. In terms of biological role, catalyzes the conversion of D-ribulose 5-phosphate to formate and 3,4-dihydroxy-2-butanone 4-phosphate. Functionally, catalyzes the conversion of GTP to 2,5-diamino-6-ribosylamino-4(3H)-pyrimidinone 5'-phosphate (DARP), formate and pyrophosphate. This is Riboflavin biosynthesis protein RibBA from Thermotoga maritima (strain ATCC 43589 / DSM 3109 / JCM 10099 / NBRC 100826 / MSB8).